Here is a 43-residue protein sequence, read N- to C-terminus: Cytochrome b559 subunit beta (43 aa).

The helical transmembrane segment at 18 to 34 threads the bilayer; it reads WLAIHGLAIPTVFFFGA. His22 serves as a coordination point for heme.

The protein belongs to the PsbE/PsbF family. In terms of assembly, heterodimer of an alpha subunit and a beta subunit. PSII is composed of 1 copy each of membrane proteins PsbA, PsbB, PsbC, PsbD, PsbE, PsbF, PsbH, PsbI, PsbJ, PsbK, PsbL, PsbM, PsbT, PsbY, PsbZ, Psb30/Ycf12, at least 3 peripheral proteins of the oxygen-evolving complex and a large number of cofactors. It forms dimeric complexes. It depends on heme b as a cofactor.

The protein resides in the plastid. It is found in the chloroplast thylakoid membrane. In terms of biological role, this b-type cytochrome is tightly associated with the reaction center of photosystem II (PSII). PSII is a light-driven water:plastoquinone oxidoreductase that uses light energy to abstract electrons from H(2)O, generating O(2) and a proton gradient subsequently used for ATP formation. It consists of a core antenna complex that captures photons, and an electron transfer chain that converts photonic excitation into a charge separation. The polypeptide is Cytochrome b559 subunit beta (Cyanidium caldarium (Red alga)).